The following is a 118-amino-acid chain: Large ribosomal subunit protein uL22 (118 aa).

The protein belongs to the universal ribosomal protein uL22 family. As to quaternary structure, part of the 50S ribosomal subunit.

Functionally, this protein binds specifically to 23S rRNA; its binding is stimulated by other ribosomal proteins, e.g. L4, L17, and L20. It is important during the early stages of 50S assembly. It makes multiple contacts with different domains of the 23S rRNA in the assembled 50S subunit and ribosome. Its function is as follows. The globular domain of the protein is located near the polypeptide exit tunnel on the outside of the subunit, while an extended beta-hairpin is found that lines the wall of the exit tunnel in the center of the 70S ribosome. The polypeptide is Large ribosomal subunit protein uL22 (Pediococcus pentosaceus (strain ATCC 25745 / CCUG 21536 / LMG 10740 / 183-1w)).